Here is a 370-residue protein sequence, read N- to C-terminus: Peptidyl-prolyl cis-trans isomerase D (370 aa).

Ser5 is subject to Phosphoserine. The 165-residue stretch at 19-183 folds into the PPIase cyclophilin-type domain; it reads FFDVDIGGER…KLCVIAECGE (165 aa). At Lys171 the chain carries N6-acetyllysine. The tract at residues 185-215 is chaperone activity; the sequence is KEGDDGGIFPKDGSGDSHPDFPEDADIDLKD. Residue Ser198 is modified to Phosphoserine. Positions 214 to 370 are interaction with HSP90AB1; it reads KDVDKILLIT…EKAVYAKMFA (157 aa). TPR repeat units follow at residues 223–256, 273–306, and 307–340; these read TEDL…VDSS, LSCV…DPSN, and TKAL…APED.

Belongs to the cyclophilin-type PPIase family. PPIase D subfamily. Identified in ESR1 or NR3C1/GCR steroid receptor-chaperone complexes. Found in HSP90 chaperone complexes with kinase clients LCK or EIF2AK1. Two monomers associate with one HSP90 homodimer. Interacts with HSP90AA1. Interacts with HSP90AB1; PPID and FKBP4 compete for binding to HSP90AB1 and the interaction is mutually exclusive with the PPID:HSPA8 interaction. Interacts with HSPA8; PPID and STIP1 but not FKBP4 compete for binding to HSPA8 and the interaction is mutually exclusive with the PPID:HSP90AB1 interaction. Interacts with S100A1 and S100A2; the interactions dissociate the PPID:HSP90AA1 interaction. Interacts with S100A6. Interacts with MYB, ILF2, XRCC6, RACK1 and RPS3. Interacts with cytoplasmic dynein 1 intermediate chain (DYNC1I1 or DYNC1I2). In terms of tissue distribution, widely expressed.

The protein localises to the cytoplasm. The protein resides in the nucleus. Its subcellular location is the nucleolus. It is found in the nucleoplasm. It carries out the reaction [protein]-peptidylproline (omega=180) = [protein]-peptidylproline (omega=0). Less sensitive to inhibition by cyclosporin A than is CYP-18. Functionally, PPIase that catalyzes the cis-trans isomerization of proline imidic peptide bonds in oligopeptides and may therefore assist protein folding. Proposed to act as a co-chaperone in HSP90 complexes such as in unligated steroid receptors heterocomplexes. Different co-chaperones seem to compete for association with HSP90 thus establishing distinct HSP90-co-chaperone-receptor complexes with the potential to exert tissue-specific receptor activity control. May have a preference for estrogen receptor complexes and is not found in glucocorticoid receptor complexes. May be involved in cytoplasmic dynein-dependent movement of the receptor from the cytoplasm to the nucleus. May regulate MYB by inhibiting its DNA-binding activity. Involved in regulation of AHR signaling by promoting the formation of the AHR:ARNT dimer; the function is independent of HSP90 but requires the chaperone activity. Involved in regulation of UV radiation-induced apoptosis. Promotes cell viability in anaplastic lymphoma kinase-positive anaplastic large-cell lymphoma (ALK+ ALCL) cell lines. Its function is as follows. (Microbial infection) May be involved in hepatitis C virus (HCV) replication and release. In Homo sapiens (Human), this protein is Peptidyl-prolyl cis-trans isomerase D.